Reading from the N-terminus, the 144-residue chain is Putative pre-16S rRNA nuclease (144 aa).

It belongs to the YqgF nuclease family.

The protein resides in the cytoplasm. Functionally, could be a nuclease involved in processing of the 5'-end of pre-16S rRNA. This chain is Putative pre-16S rRNA nuclease, found in Oenococcus oeni (strain ATCC BAA-331 / PSU-1).